Here is a 127-residue protein sequence, read N- to C-terminus: Modulator protein MzrA (127 aa).

Topologically, residues 1-10 (MLKPRITARQ) are cytoplasmic. The chain crosses the membrane as a helical span at residues 11–31 (LIWISAFLLMLTILMMTWSTL). Topologically, residues 32–127 (RQQESTLAIR…RLRESSHRFG (96 aa)) are periplasmic.

Belongs to the MzrA family. In terms of assembly, interacts with EnvZ.

It is found in the cell inner membrane. Functionally, modulates the activity of the EnvZ/OmpR two-component regulatory system, probably by directly modulating EnvZ enzymatic activity and increasing stability of phosphorylated OmpR. The sequence is that of Modulator protein MzrA from Salmonella agona (strain SL483).